Consider the following 196-residue polypeptide: MTRQATIDRTTSETSIRLSIDLDGTGQTDIATGIGFLDHMLTALARHALLDLTIRATSDLHIDDHHTTEDVGIVLGQALRQALGDKKGIRRFGHAIVPMDEALAEAAIDLSGRAHVAWSVPFLQSKVGTMDTELFEEFFRAFGGNALMTLHVTLKAGTNTHHVAEACFKAVARALRMAVERDPRVGDAIPSTKGAL.

It belongs to the imidazoleglycerol-phosphate dehydratase family.

It localises to the cytoplasm. The enzyme catalyses D-erythro-1-(imidazol-4-yl)glycerol 3-phosphate = 3-(imidazol-4-yl)-2-oxopropyl phosphate + H2O. The protein operates within amino-acid biosynthesis; L-histidine biosynthesis; L-histidine from 5-phospho-alpha-D-ribose 1-diphosphate: step 6/9. The polypeptide is Imidazoleglycerol-phosphate dehydratase (Granulibacter bethesdensis (strain ATCC BAA-1260 / CGDNIH1)).